The primary structure comprises 188 residues: Elongation factor P (188 aa).

At Lys-34 the chain carries N6-(3,6-diaminohexanoyl)-5-hydroxylysine.

It belongs to the elongation factor P family. Post-translationally, may be beta-lysylated on the epsilon-amino group of Lys-34 by the combined action of EpmA and EpmB, and then hydroxylated on the C5 position of the same residue by EpmC (if this protein is present). Lysylation is critical for the stimulatory effect of EF-P on peptide-bond formation. The lysylation moiety may extend toward the peptidyltransferase center and stabilize the terminal 3-CCA end of the tRNA. Hydroxylation of the C5 position on Lys-34 may allow additional potential stabilizing hydrogen-bond interactions with the P-tRNA.

Its subcellular location is the cytoplasm. It participates in protein biosynthesis; polypeptide chain elongation. Involved in peptide bond synthesis. Alleviates ribosome stalling that occurs when 3 or more consecutive Pro residues or the sequence PPG is present in a protein, possibly by augmenting the peptidyl transferase activity of the ribosome. Modification of Lys-34 is required for alleviation. The polypeptide is Elongation factor P (Serratia proteamaculans (strain 568)).